The following is a 130-amino-acid chain: Small ribosomal subunit protein uS8 (130 aa).

Belongs to the universal ribosomal protein uS8 family. As to quaternary structure, part of the 30S ribosomal subunit.

Its function is as follows. One of the primary rRNA binding proteins, it binds directly to 16S rRNA central domain where it helps coordinate assembly of the platform of the 30S subunit. The protein is Small ribosomal subunit protein uS8 (rps8) of Methanocaldococcus jannaschii (strain ATCC 43067 / DSM 2661 / JAL-1 / JCM 10045 / NBRC 100440) (Methanococcus jannaschii).